Consider the following 397-residue polypeptide: Oxygen-dependent coproporphyrinogen-III oxidase, chloroplastic (397 aa).

The interval 76–95 (ESDMGSNVTSNSSSVRGRFE) is disordered. The span at 79–90 (MGSNVTSNSSSV) shows a compositional bias: polar residues. The interval 135-144 (VLQDGAVFEK) is important for dimerization. Position 185 (Ser-185) interacts with substrate. His-199 (proton donor) is an active-site residue. Substrate-binding positions include 201-203 (NYR) and 355-360 (GGRIES). Residues 337–372 (YVEFNLVYDRGTTFGLKTGGRIESILVSLPLTARWE) are important for dimerization.

Belongs to the aerobic coproporphyrinogen-III oxidase family. Homodimer.

The protein localises to the plastid. It is found in the chloroplast. It carries out the reaction coproporphyrinogen III + O2 + 2 H(+) = protoporphyrinogen IX + 2 CO2 + 2 H2O. Its pathway is porphyrin-containing compound metabolism; protoporphyrin-IX biosynthesis; protoporphyrinogen-IX from coproporphyrinogen-III (O2 route): step 1/1. Functionally, involved in the heme and chlorophyll biosynthesis. Catalyzes the aerobic oxidative decarboxylation of propionate groups of rings A and B of coproporphyrinogen-III to yield the vinyl groups in protoporphyrinogen-IX. The protein is Oxygen-dependent coproporphyrinogen-III oxidase, chloroplastic (CPX) of Nicotiana tabacum (Common tobacco).